A 270-amino-acid chain; its full sequence is Non-structural maintenance of chromosomes element 1 homolog (270 aa).

The RING-type; atypical zinc-finger motif lies at cysteine 185 to asparagine 226. The tract at residues leucine 236–arginine 270 is disordered. Polar residues-rich tracts occupy residues asparagine 237–threonine 251 and serine 259–arginine 270.

This sequence belongs to the NSE1 family. As to quaternary structure, component of the SMC5-SMC6 complex.

It localises to the nucleus. It is found in the chromosome. The protein localises to the telomere. It catalyses the reaction S-ubiquitinyl-[E2 ubiquitin-conjugating enzyme]-L-cysteine + [acceptor protein]-L-lysine = [E2 ubiquitin-conjugating enzyme]-L-cysteine + N(6)-ubiquitinyl-[acceptor protein]-L-lysine.. RING-type zinc finger-containing E3 ubiquitin ligase that assembles with melanoma antigen protein (MAGE) to catalyze the direct transfer of ubiquitin from E2 ubiquitin-conjugating enzyme to a specific substrate. Within MAGE-RING ubiquitin ligase complex, MAGE stimulates and specifies ubiquitin ligase activity likely through recruitment and/or stabilization of the E2 ubiquitin-conjugating enzyme at the E3:substrate complex. Involved in maintenance of genome integrity, DNA damage response and DNA repair. This is Non-structural maintenance of chromosomes element 1 homolog (nsmce1) from Xenopus laevis (African clawed frog).